The chain runs to 389 residues: (+)-bicyclogermacrene synthase TS4 (389 aa).

5 residues coordinate Mg(2+): Asp-136, Glu-140, His-284, Gly-288, and Asp-292. The DDxx(x)D/E motif signature appears at 136–140 (DEVCE). Residues 284–292 (HDFIGLQKD) carry the NDxxSxxxD/E motif motif.

Belongs to the terpene synthase family.

The catalysed reaction is (2E,6E)-farnesyl diphosphate = bicyclogermacrene + diphosphate. Catalyzes the cyclization of trans,trans-farnesyl diphosphate (FPP) to the bicyclic sesquiterpene bicyclogermacrene. This is (+)-bicyclogermacrene synthase TS4 from Penicillium expansum (Blue mold rot fungus).